The chain runs to 360 residues: Fructose-bisphosphate aldolase 1 (360 aa).

Residue S63 coordinates D-glyceraldehyde 3-phosphate. Residue D110 is the Proton donor of the active site. Residues H111, D145, E175, and H227 each coordinate Zn(2+). G228 is a dihydroxyacetone phosphate binding site. Residue H266 participates in Zn(2+) binding. A dihydroxyacetone phosphate-binding site is contributed by 267–269 (GGS).

Belongs to the class II fructose-bisphosphate aldolase family. In terms of assembly, homodimer. It depends on Zn(2+) as a cofactor.

The catalysed reaction is beta-D-fructose 1,6-bisphosphate = D-glyceraldehyde 3-phosphate + dihydroxyacetone phosphate. It functions in the pathway carbohydrate degradation; glycolysis; D-glyceraldehyde 3-phosphate and glycerone phosphate from D-glucose: step 4/4. Functionally, catalyzes the aldol condensation of dihydroxyacetone phosphate (DHAP or glycerone-phosphate) with glyceraldehyde 3-phosphate (G3P) to form fructose 1,6-bisphosphate (FBP) in gluconeogenesis and the reverse reaction in glycolysis. The chain is Fructose-bisphosphate aldolase 1 (FBA1) from Paracoccidioides lutzii (strain ATCC MYA-826 / Pb01) (Paracoccidioides brasiliensis).